The primary structure comprises 196 residues: Adenylate kinase (196 aa).

9-17 contacts ATP; sequence GIPGVGKST.

The protein belongs to the archaeal adenylate kinase family.

It localises to the cytoplasm. The catalysed reaction is AMP + ATP = 2 ADP. This Thermococcus sibiricus (strain DSM 12597 / MM 739) protein is Adenylate kinase.